The chain runs to 145 residues: Basic phospholipase A2 cL037 (145 aa).

The signal sequence occupies residues 1–21 (MYPAHLLVLLAVCVSLLGASA). A propeptide spanning residues 22–27 (ILPLPL) is cleaved from the precursor. Intrachain disulfides connect C38–C98, C54–C144, C56–C72, C71–C125, C78–C118, C87–C111, and C105–C116. Y55, G57, and G59 together coordinate Ca(2+). The active site involves H75. A Ca(2+)-binding site is contributed by D76. The active site involves D119.

The protein belongs to the phospholipase A2 family. Group I subfamily. D49 sub-subfamily. Ca(2+) serves as cofactor. As to expression, expressed by the venom gland.

The protein resides in the secreted. The enzyme catalyses a 1,2-diacyl-sn-glycero-3-phosphocholine + H2O = a 1-acyl-sn-glycero-3-phosphocholine + a fatty acid + H(+). Functionally, PLA2 catalyzes the calcium-dependent hydrolysis of the 2-acyl groups in 3-sn-phosphoglycerides. The protein is Basic phospholipase A2 cL037 of Laticauda semifasciata (Black-banded sea krait).